Here is a 330-residue protein sequence, read N- to C-terminus: Elongation factor Ts (330 aa).

An involved in Mg(2+) ion dislocation from EF-Tu region spans residues 79 to 82 (TDFV).

It belongs to the EF-Ts family.

Its subcellular location is the cytoplasm. Functionally, associates with the EF-Tu.GDP complex and induces the exchange of GDP to GTP. It remains bound to the aminoacyl-tRNA.EF-Tu.GTP complex up to the GTP hydrolysis stage on the ribosome. This Bacteroides fragilis (strain ATCC 25285 / DSM 2151 / CCUG 4856 / JCM 11019 / LMG 10263 / NCTC 9343 / Onslow / VPI 2553 / EN-2) protein is Elongation factor Ts.